The sequence spans 310 residues: N-acetyl-gamma-glutamyl-phosphate reductase (310 aa).

Cysteine 116 is a catalytic residue.

It belongs to the NAGSA dehydrogenase family. Type 2 subfamily.

Its subcellular location is the cytoplasm. The enzyme catalyses N-acetyl-L-glutamate 5-semialdehyde + phosphate + NADP(+) = N-acetyl-L-glutamyl 5-phosphate + NADPH + H(+). Its pathway is amino-acid biosynthesis; L-arginine biosynthesis; N(2)-acetyl-L-ornithine from L-glutamate: step 3/4. Its function is as follows. Catalyzes the NADPH-dependent reduction of N-acetyl-5-glutamyl phosphate to yield N-acetyl-L-glutamate 5-semialdehyde. The polypeptide is N-acetyl-gamma-glutamyl-phosphate reductase (Chelativorans sp. (strain BNC1)).